We begin with the raw amino-acid sequence, 549 residues long: Movement protein Hsp70h (549 aa).

Belongs to the heat shock protein 70 family.

It is found in the virion. Transports viral genome to neighboring plant cells directly through plasmosdesmata, without any budding. The movement protein allows efficient cell to cell propagation, by bypassing the host cell wall barrier. Two movement proteins, p6, Hsp70h and three structural proteins, CP, CPm, and P64 are essential for cell-cell movement. Also plays a role in virion formation. Together with CPm and p64, encapsidates the 5'-terminal portion of the viral genome. This chain is Movement protein Hsp70h, found in Vitis vinifera (Grape).